Here is a 210-residue protein sequence, read N- to C-terminus: CASP-like protein 3A1 (210 aa).

Residues 1–44 (MNGLKTPPEIGIQLPEAKVAAETGTMSGPLVPPRSDRSVRRGTD) lie on the Cytoplasmic side of the membrane. The chain crosses the membrane as a helical span at residues 45 to 65 (VAHVVLRFVCLLTSVIALSLM). Topologically, residues 66 to 94 (ATAKEAASISIYGFLLPVSSKWSFSDSFE) are extracellular. A helical membrane pass occupies residues 95 to 115 (YLVGVSAAVAAHALLQLIISV). At 116 to 130 (SRLLRKSPVIPSRNH) the chain is on the cytoplasmic side. Residues 131-151 (AWLIFAGDQAFAYAMLSAGSA) traverse the membrane as a helical segment. Residues 152–185 (ASGVTNLNRTGIRHSPLPNFCKPLRSFCDHVAAS) lie on the Extracellular side of the membrane. Residue asparagine 159 is glycosylated (N-linked (GlcNAc...) asparagine). A helical membrane pass occupies residues 186-206 (IAFTFFSCFLLATSAILDVIW). The Cytoplasmic portion of the chain corresponds to 207–210 (LSKY).

The protein belongs to the Casparian strip membrane proteins (CASP) family. As to quaternary structure, homodimer and heterodimers.

Its subcellular location is the cell membrane. The protein is CASP-like protein 3A1 of Vitis vinifera (Grape).